The following is a 513-amino-acid chain: NAD(P)H-quinone oxidoreductase subunit 2 (513 aa).

Helical transmembrane passes span 15 to 35 (VIWPEGILIITLMVILIGDLI), 43 to 63 (WLPYVAIAGLLAAVVALYFTW), 80 to 100 (LSIVFRAIIALSTASTVLMSI), 110 to 130 (LAEFLAIMLTATLGGMFLSGA), 133 to 153 (LVMIFISLEMLSISSYLMTGY), 168 to 188 (LLIGASSSAIFLYGVSLLYGL), 211 to 231 (LALAIALVFVIAGIAFKISAV), 245 to 265 (PTPVVAFLSVGSKAAGFALAI), 281 to 301 (FIFIALAILSMILGNVVALAQ), 307 to 327 (MLAYSSIGQAGFVMIGLTAGT), 335 to 355 (IFYLLIYLFMNLGAFACVILF), 379 to 399 (LCLSICLLSLGGIPPLAGFFG), 401 to 421 (IYLFWAGWQAGLYALVLVGLV), and 467 to 487 (VGIVLSLVATSLAGILSNPLF).

It belongs to the complex I subunit 2 family. NDH-1 can be composed of about 15 different subunits; different subcomplexes with different compositions have been identified which probably have different functions.

Its subcellular location is the cellular thylakoid membrane. It carries out the reaction a plastoquinone + NADH + (n+1) H(+)(in) = a plastoquinol + NAD(+) + n H(+)(out). The catalysed reaction is a plastoquinone + NADPH + (n+1) H(+)(in) = a plastoquinol + NADP(+) + n H(+)(out). Its function is as follows. NDH-1 shuttles electrons from an unknown electron donor, via FMN and iron-sulfur (Fe-S) centers, to quinones in the respiratory and/or the photosynthetic chain. The immediate electron acceptor for the enzyme in this species is believed to be plastoquinone. Couples the redox reaction to proton translocation, and thus conserves the redox energy in a proton gradient. Cyanobacterial NDH-1 also plays a role in inorganic carbon-concentration. This is NAD(P)H-quinone oxidoreductase subunit 2 from Microcystis aeruginosa (strain NIES-843 / IAM M-2473).